Consider the following 368-residue polypeptide: Nicotinamide/nicotinic acid mononucleotide adenylyltransferase (368 aa).

Residues 1–14 (MHTMNGDNFANSFP) are compositionally biased toward polar residues. Residues 1-25 (MHTMNGDNFANSFPKNPLLSRNSSS) form a disordered region. A Phosphoserine modification is found at Ser36. Positions 47-78 (AKEHEERIRRPSVNRAWQKNSTSGGPSVSLEK) are disordered. Polar residues predominate over residues 61-72 (RAWQKNSTSGGP). A phosphoserine mark is found at Ser75 and Ser85. The NAD(+) site is built by Ser135 and Phe136. His143 is a binding site for ATP. 6 residues coordinate NAD(+): Thr215, Gly250, Asp252, Trp263, Arg282, and Asn313. 318–321 (TKVR) contacts ATP.

The protein belongs to the eukaryotic NMN adenylyltransferase family. A divalent metal cation serves as cofactor.

The protein localises to the cytoplasm. Its subcellular location is the nucleus. The enzyme catalyses beta-nicotinamide D-ribonucleotide + ATP + H(+) = diphosphate + NAD(+). It carries out the reaction nicotinate beta-D-ribonucleotide + ATP + H(+) = deamido-NAD(+) + diphosphate. It participates in cofactor biosynthesis; NAD(+) biosynthesis; deamido-NAD(+) from nicotinate D-ribonucleotide: step 1/1. The protein operates within cofactor biosynthesis; NAD(+) biosynthesis; NAD(+) from nicotinamide D-ribonucleotide: step 1/1. Functionally, catalyzes the formation of NAD(+) from nicotinamide mononucleotide (NMN) and ATP. Can also use the deamidated form; nicotinic acid mononucleotide (NaMN) as substrate to form deamido-NAD(+) (NaAD). Key enzyme in both de novo and salvage pathways for NAD(+) biosynthesis. The polypeptide is Nicotinamide/nicotinic acid mononucleotide adenylyltransferase (Schizosaccharomyces pombe (strain 972 / ATCC 24843) (Fission yeast)).